Here is a 197-residue protein sequence, read N- to C-terminus: TATA-box-binding protein (197 aa).

2 consecutive repeat copies span residues 10–86 and 101–177.

The protein belongs to the TBP family.

Its function is as follows. General factor that plays a role in the activation of archaeal genes transcribed by RNA polymerase. Binds specifically to the TATA box promoter element which lies close to the position of transcription initiation. This is TATA-box-binding protein from Pyrobaculum neutrophilum (strain DSM 2338 / JCM 9278 / NBRC 100436 / V24Sta) (Thermoproteus neutrophilus).